The chain runs to 385 residues: Chaperone protein DnaJ (385 aa).

In terms of domain architecture, J spans 5–70; sequence DYYEVLGVAK…QKRAAYDRYG (66 aa). Residues 145–223 form a CR-type zinc finger; it reads GFDTEIRVPS…CDGVGRTRRN (79 aa). 8 residues coordinate Zn(2+): cysteine 158, cysteine 161, cysteine 175, cysteine 178, cysteine 197, cysteine 200, cysteine 211, and cysteine 214. 4 CXXCXGXG motif repeats span residues 158–165, 175–182, 197–204, and 211–218; these read CDTCHGSG, CRTCGGSG, CPTCHGTG, and CPSCDGVG.

The protein belongs to the DnaJ family. As to quaternary structure, homodimer. It depends on Zn(2+) as a cofactor.

Its subcellular location is the cytoplasm. Its function is as follows. Participates actively in the response to hyperosmotic and heat shock by preventing the aggregation of stress-denatured proteins and by disaggregating proteins, also in an autonomous, DnaK-independent fashion. Unfolded proteins bind initially to DnaJ; upon interaction with the DnaJ-bound protein, DnaK hydrolyzes its bound ATP, resulting in the formation of a stable complex. GrpE releases ADP from DnaK; ATP binding to DnaK triggers the release of the substrate protein, thus completing the reaction cycle. Several rounds of ATP-dependent interactions between DnaJ, DnaK and GrpE are required for fully efficient folding. Also involved, together with DnaK and GrpE, in the DNA replication of plasmids through activation of initiation proteins. The polypeptide is Chaperone protein DnaJ (Bordetella pertussis (strain Tohama I / ATCC BAA-589 / NCTC 13251)).